The primary structure comprises 150 residues: Lipoprotein signal peptidase (150 aa).

The next 3 helical transmembrane spans lie at 8 to 28 (FYAL…LAHA), 58 to 78 (GFSW…GWFL), and 81 to 101 (TTGS…NVFD). Catalysis depends on residues D116 and D132. A helical transmembrane segment spans residues 126–146 (VVFNIADLFILAGVFGTFLFL).

Belongs to the peptidase A8 family.

It is found in the cell membrane. The enzyme catalyses Release of signal peptides from bacterial membrane prolipoproteins. Hydrolyzes -Xaa-Yaa-Zaa-|-(S,diacylglyceryl)Cys-, in which Xaa is hydrophobic (preferably Leu), and Yaa (Ala or Ser) and Zaa (Gly or Ala) have small, neutral side chains.. Its pathway is protein modification; lipoprotein biosynthesis (signal peptide cleavage). In terms of biological role, this protein specifically catalyzes the removal of signal peptides from prolipoproteins. This chain is Lipoprotein signal peptidase, found in Tropheryma whipplei (strain TW08/27) (Whipple's bacillus).